Consider the following 230-residue polypeptide: UPF0173 metal-dependent hydrolase Mbar_A3716 (230 aa).

It belongs to the UPF0173 family.

The sequence is that of UPF0173 metal-dependent hydrolase Mbar_A3716 from Methanosarcina barkeri (strain Fusaro / DSM 804).